A 130-amino-acid chain; its full sequence is Succinate dehydrogenase hydrophobic membrane anchor subunit (130 aa).

At 1–25 the chain is on the cytoplasmic side; it reads MSESYDRGLVADFGRWTEFSAGMWA. Residues 26-46 form a helical membrane-spanning segment; that stretch reads WVFHKFTGWVLVGYLFTHISV. The Periplasmic segment spans residues 47–71; it reads LSTSLQGAQVYNSTLSGLESLAIVR. Residues 72-93 form a helical membrane-spanning segment; sequence LLEVGLLAVAVFHILNGIRLLF. A heme-binding site is contributed by H84. The Cytoplasmic segment spans residues 94–103; that stretch reads VDLGVGLEAQ. Residues 104–128 form a helical membrane-spanning segment; that stretch reads DKSFYASLVLTGVIVVASVPTFLTG.

Part of an enzyme complex containing four subunits: a flavoprotein, an iron-sulfur protein, plus two membrane-anchoring proteins, SdhC and SdhD. Heme serves as cofactor.

The protein resides in the cell membrane. It participates in carbohydrate metabolism; tricarboxylic acid cycle. Functionally, membrane-anchoring subunit of succinate dehydrogenase (SDH). This is Succinate dehydrogenase hydrophobic membrane anchor subunit (sdhD) from Halobacterium salinarum (strain ATCC 700922 / JCM 11081 / NRC-1) (Halobacterium halobium).